Consider the following 349-residue polypeptide: Holliday junction branch migration complex subunit RuvB (349 aa).

A large ATPase domain (RuvB-L) region spans residues 1–186; that stretch reads MSEDYLDRDV…FGFTAHMDFY (186 aa). ATP contacts are provided by residues Leu25, Arg26, Gly67, Lys70, Thr71, Ser72, 133 to 135, Arg176, Tyr186, and Arg223; that span reads EDF. Residue Thr71 participates in Mg(2+) binding. Positions 187–257 are small ATPAse domain (RuvB-S); that stretch reads EPTELEGVLA…VAKAALAVYD (71 aa). A head domain (RuvB-H) region spans residues 260 to 349; the sequence is ELGLDRLDRA…GLSQPGLFES (90 aa). 2 residues coordinate DNA: Arg315 and Arg320.

Belongs to the RuvB family. As to quaternary structure, homohexamer. Forms an RuvA(8)-RuvB(12)-Holliday junction (HJ) complex. HJ DNA is sandwiched between 2 RuvA tetramers; dsDNA enters through RuvA and exits via RuvB. An RuvB hexamer assembles on each DNA strand where it exits the tetramer. Each RuvB hexamer is contacted by two RuvA subunits (via domain III) on 2 adjacent RuvB subunits; this complex drives branch migration. In the full resolvosome a probable DNA-RuvA(4)-RuvB(12)-RuvC(2) complex forms which resolves the HJ.

Its subcellular location is the cytoplasm. The catalysed reaction is ATP + H2O = ADP + phosphate + H(+). The RuvA-RuvB-RuvC complex processes Holliday junction (HJ) DNA during genetic recombination and DNA repair, while the RuvA-RuvB complex plays an important role in the rescue of blocked DNA replication forks via replication fork reversal (RFR). RuvA specifically binds to HJ cruciform DNA, conferring on it an open structure. The RuvB hexamer acts as an ATP-dependent pump, pulling dsDNA into and through the RuvAB complex. RuvB forms 2 homohexamers on either side of HJ DNA bound by 1 or 2 RuvA tetramers; 4 subunits per hexamer contact DNA at a time. Coordinated motions by a converter formed by DNA-disengaged RuvB subunits stimulates ATP hydrolysis and nucleotide exchange. Immobilization of the converter enables RuvB to convert the ATP-contained energy into a lever motion, pulling 2 nucleotides of DNA out of the RuvA tetramer per ATP hydrolyzed, thus driving DNA branch migration. The RuvB motors rotate together with the DNA substrate, which together with the progressing nucleotide cycle form the mechanistic basis for DNA recombination by continuous HJ branch migration. Branch migration allows RuvC to scan DNA until it finds its consensus sequence, where it cleaves and resolves cruciform DNA. This Mycobacterium leprae (strain Br4923) protein is Holliday junction branch migration complex subunit RuvB.